The following is a 113-amino-acid chain: Hydrogenase maturation factor HypA (113 aa).

H2 contributes to the Ni(2+) binding site. Residues C70, C73, C86, and C88 each contribute to the Zn(2+) site.

This sequence belongs to the HypA/HybF family.

Involved in the maturation of [NiFe] hydrogenases. Required for nickel insertion into the metal center of the hydrogenase. This chain is Hydrogenase maturation factor HypA, found in Nostoc sp. (strain PCC 7120 / SAG 25.82 / UTEX 2576).